A 155-amino-acid chain; its full sequence is uncharacterized protein (155 aa).

2 disordered regions span residues 1–22 (MSSQ…TFTF) and 110–155 (NKEP…DTQA). Position 2 is an N-acetylserine (Ser2). Ser136, Ser144, and Ser146 each carry phosphoserine. A compositionally biased stretch (acidic residues) spans 136-155 (SDEDLDAESDSDGEDGDTQA).

This is an uncharacterized protein from Mus musculus (Mouse).